The chain runs to 146 residues: 3-hydroxyacyl-[acyl-carrier-protein] dehydratase FabZ (146 aa).

The active site involves His-48.

It belongs to the thioester dehydratase family. FabZ subfamily.

The protein resides in the cytoplasm. It carries out the reaction a (3R)-hydroxyacyl-[ACP] = a (2E)-enoyl-[ACP] + H2O. Involved in unsaturated fatty acids biosynthesis. Catalyzes the dehydration of short chain beta-hydroxyacyl-ACPs and long chain saturated and unsaturated beta-hydroxyacyl-ACPs. The sequence is that of 3-hydroxyacyl-[acyl-carrier-protein] dehydratase FabZ from Campylobacter jejuni subsp. jejuni serotype O:6 (strain 81116 / NCTC 11828).